A 37-amino-acid polypeptide reads, in one-letter code: Large ribosomal subunit protein bL36 (37 aa).

It belongs to the bacterial ribosomal protein bL36 family.

This Marinomonas sp. (strain MWYL1) protein is Large ribosomal subunit protein bL36.